Consider the following 478-residue polypeptide: Cytochrome c-552 (478 aa).

Residues 1-26 (MARKTLRARRFFSLIFPFFFITSVYA) form the signal peptide. His94 is a binding site for heme c. The heme site is built by Cys122, Cys125, and Lys126. Residues Cys160, Cys163, His164, Cys209, Cys212, and His213 each contribute to the heme c site. The Ca(2+) site is built by Glu215, Tyr216, Lys261, and Gln263. Tyr216 contributes to the substrate binding site. His264 provides a ligand contact to substrate. 9 residues coordinate heme c: His275, Cys282, Cys285, His286, His301, Cys314, Cys317, His318, and His393.

This sequence belongs to the cytochrome c-552 family. It depends on Ca(2+) as a cofactor. The cofactor is heme c.

It localises to the periplasm. It catalyses the reaction 6 Fe(III)-[cytochrome c] + NH4(+) + 2 H2O = 6 Fe(II)-[cytochrome c] + nitrite + 8 H(+). It participates in nitrogen metabolism; nitrate reduction (assimilation). Functionally, catalyzes the reduction of nitrite to ammonia, consuming six electrons in the process. In Salmonella schwarzengrund (strain CVM19633), this protein is Cytochrome c-552.